Consider the following 803-residue polypeptide: Protein translocase subunit SecA (803 aa).

Residues Gln100, 118-122, and Asp508 each bind ATP; that span reads GEGKT.

The protein belongs to the SecA family. Monomer and homodimer. Part of the essential Sec protein translocation apparatus which comprises SecA, SecYEG and auxiliary proteins SecDF. Other proteins may also be involved.

It localises to the cell membrane. The protein localises to the cytoplasm. The catalysed reaction is ATP + H2O + cellular proteinSide 1 = ADP + phosphate + cellular proteinSide 2.. Its function is as follows. Part of the Sec protein translocase complex. Interacts with the SecYEG preprotein conducting channel. Has a central role in coupling the hydrolysis of ATP to the transfer of proteins into and across the cell membrane, serving as an ATP-driven molecular motor driving the stepwise translocation of polypeptide chains across the membrane. This Leuconostoc mesenteroides subsp. mesenteroides (strain ATCC 8293 / DSM 20343 / BCRC 11652 / CCM 1803 / JCM 6124 / NCDO 523 / NBRC 100496 / NCIMB 8023 / NCTC 12954 / NRRL B-1118 / 37Y) protein is Protein translocase subunit SecA.